A 253-amino-acid chain; its full sequence is Vacuolar v-SNARE NYV1 (253 aa).

The Cytoplasmic portion of the chain corresponds to 1 to 231; that stretch reads MKRFNVSYVE…EIMWWQKVKN (231 aa). The tract at residues 147–166 is disordered; it reads LNSSGNGQSSNGNGQNTISD. Residues 148–162 show a composition bias toward low complexity; that stretch reads NSSGNGQSSNGNGQN. Residues 167–227 enclose the v-SNARE coiled-coil homology domain; sequence IGDATEDQIK…VNIKEIMWWQ (61 aa). Residues 232–252 traverse the membrane as a helical; Anchor for type IV membrane protein segment; the sequence is ITLLTFTIILFVSAAFMFFYL. A topological domain (vacuolar) is located at residue W253.

Belongs to the synaptobrevin family. As to quaternary structure, present in a pentameric cis-SNARE complex composed of the v-SNAREs NYV1, VTI1 and YKT6, and the t-SNAREs VAM3 and VAM7 on vacuolar membranes. Interacts in trans with the cognate t-SNARE VAM3 during the docking step of homotypic vacuolar fusion. Interacts with the vacuolar transporter chaperone (VTC) complex and the vacuolar Ca(2+)-ATPase PMC1.

Its subcellular location is the vacuole membrane. Its function is as follows. Vacuolar v-SNARE required for docking. Only involved in homotypic vacuole fusion. Required for Ca(2+) efflux from the vacuolar lumen, a required signal for subsequent membrane fusion events, by inhibiting vacuolar Ca(2+)-ATPase PMC1 and promoting Ca(2+) release when forming trans-SNARE assemblies during the docking step. This chain is Vacuolar v-SNARE NYV1 (NYV1), found in Saccharomyces cerevisiae (strain ATCC 204508 / S288c) (Baker's yeast).